A 428-amino-acid chain; its full sequence is Probable pectin lyase F (428 aa).

An N-terminal signal peptide occupies residues 1–20; the sequence is MVLLHPLLTAAALLGASARA. Cysteine 83 and cysteine 107 form a disulfide bridge. Residue arginine 257 is part of the active site. N-linked (GlcNAc...) asparagine glycosylation is present at asparagine 276. The cysteines at positions 324 and 332 are disulfide-linked. 2 disordered regions span residues 337 to 367 and 383 to 428; these read LTSS…MTTD and GSGG…HHHY. The span at 389 to 417 shows a compositional bias: low complexity; that stretch reads AASSSASITPSPTSSAIPSSSATPSSSAY. Residues 418–428 are compositionally biased toward basic residues; it reads ARRHYARHHHY.

Belongs to the polysaccharide lyase 1 family.

Its subcellular location is the secreted. It catalyses the reaction Eliminative cleavage of (1-&gt;4)-alpha-D-galacturonan methyl ester to give oligosaccharides with 4-deoxy-6-O-methyl-alpha-D-galact-4-enuronosyl groups at their non-reducing ends.. In terms of biological role, pectinolytic enzymes consist of four classes of enzymes: pectin lyase, polygalacturonase, pectin methylesterase and rhamnogalacturonase. Among pectinolytic enzymes, pectin lyase is the most important in depolymerization of pectin, since it cleaves internal glycosidic bonds of highly methylated pectins. This Aspergillus flavus (strain ATCC 200026 / FGSC A1120 / IAM 13836 / NRRL 3357 / JCM 12722 / SRRC 167) protein is Probable pectin lyase F (pelF).